A 538-amino-acid chain; its full sequence is MMPERFSFDFRPIDQYWTRAKGACSNTKRGNMYILASLALILLHLLVLPIYLYLTWHHKYWRKRGLVTARPLTLLGTYPGLLTRKSNLVFDVQKIYDKYKGKHRAVGVFVTRQPQILVLDPELAHEVLVSNFRCYKDSLQSSYLRHAKWDKYARLNPFWASGQSWRRLRTDAQAGISGSRLRQAYNIWEQGGQMLTEYMTQQVAEKNNILETRDLCFRYTAHVMADFIWGIDAGTLTRPMEQPNKVQEMASKWTSYAFYMLTLFMATIVAPCSRLLLRFRFYPKETDEFFSNLTKESIELRLKAGDSTRTDYLSHLLQLRDQKQATHDDLVGHALTVMLDGYDTSGTALLHALYYLAENPAVQQKLRVEILSCMASEKSLDFEKLSSLQYLEQVIYESLRLSSLIPQYTKVCTLPTVIRLSESKSLDVEVGMTIMIPNYQFHHDKQYFPEPEAFKPERFDNGAYQELMRKGIFLPFSDGPRICMGVPLAMLTLKSALVHILSNFQVVRGRDRLIPKGDSGFGVVLQGDVNLEYRRFFR.

C483 provides a ligand contact to heme.

It belongs to the cytochrome P450 family. The cofactor is heme.

The protein resides in the endoplasmic reticulum membrane. The protein localises to the microsome membrane. Functionally, may be involved in the metabolism of insect hormones and in the breakdown of synthetic insecticides. This is Probable cytochrome P450 309a2 (Cyp309a2) from Drosophila melanogaster (Fruit fly).